The following is a 309-amino-acid chain: ATP synthase gamma chain (309 aa).

It belongs to the ATPase gamma chain family. As to quaternary structure, F-type ATPases have 2 components, CF(1) - the catalytic core - and CF(0) - the membrane proton channel. CF(1) has five subunits: alpha(3), beta(3), gamma(1), delta(1), epsilon(1). CF(0) has three main subunits: a, b and c.

The protein resides in the cell membrane. Produces ATP from ADP in the presence of a proton gradient across the membrane. The gamma chain is believed to be important in regulating ATPase activity and the flow of protons through the CF(0) complex. This Mycobacterium sp. (strain JLS) protein is ATP synthase gamma chain.